A 198-amino-acid chain; its full sequence is Probable GTP-binding protein EngB (198 aa).

An EngB-type G domain is found at 22-195 (DLPEIALAGR…WKAIHKFTKT (174 aa)). GTP is bound by residues 30–37 (GRSNVGKS), 57–61 (GKTQT), 75–78 (DVPG), 142–145 (TKAD), and 174–176 (FSS). The Mg(2+) site is built by serine 37 and threonine 59.

The protein belongs to the TRAFAC class TrmE-Era-EngA-EngB-Septin-like GTPase superfamily. EngB GTPase family. Mg(2+) serves as cofactor.

Functionally, necessary for normal cell division and for the maintenance of normal septation. The sequence is that of Probable GTP-binding protein EngB from Bacillus anthracis (strain A0248).